We begin with the raw amino-acid sequence, 118 residues long: Nucleoid-associated protein CTN_1899 (118 aa).

This sequence belongs to the YbaB/EbfC family. Homodimer.

It localises to the cytoplasm. Its subcellular location is the nucleoid. Its function is as follows. Binds to DNA and alters its conformation. May be involved in regulation of gene expression, nucleoid organization and DNA protection. The sequence is that of Nucleoid-associated protein CTN_1899 from Thermotoga neapolitana (strain ATCC 49049 / DSM 4359 / NBRC 107923 / NS-E).